An 85-amino-acid chain; its full sequence is MRKVILKLIRFYQKYISPLKPPTCRFEPTCSTYTYQAVERFGILKGLLLGFWRVLRCNPISKGGHDPVPTEFYLFKKSNNSLRRR.

The protein belongs to the UPF0161 family.

The protein localises to the cell inner membrane. Its function is as follows. Could be involved in insertion of integral membrane proteins into the membrane. The chain is Putative membrane protein insertion efficiency factor from Fervidobacterium nodosum (strain ATCC 35602 / DSM 5306 / Rt17-B1).